An 813-amino-acid polypeptide reads, in one-letter code: Valine--tRNA ligase (813 aa).

The short motif at 46–56 (PTVSGQLHIGH) is the 'HIGH' region element. Residues 536–540 (KMSKS) carry the 'KMSKS' region motif. Lys-539 provides a ligand contact to ATP.

The protein belongs to the class-I aminoacyl-tRNA synthetase family. ValS type 2 subfamily. As to quaternary structure, monomer.

Its subcellular location is the cytoplasm. It carries out the reaction tRNA(Val) + L-valine + ATP = L-valyl-tRNA(Val) + AMP + diphosphate. Functionally, catalyzes the attachment of valine to tRNA(Val). As ValRS can inadvertently accommodate and process structurally similar amino acids such as threonine, to avoid such errors, it has a 'posttransfer' editing activity that hydrolyzes mischarged Thr-tRNA(Val) in a tRNA-dependent manner. The sequence is that of Valine--tRNA ligase from Rickettsia canadensis (strain McKiel).